The sequence spans 1445 residues: Protein HUA2-LIKE 1 (1445 aa).

The 58-residue stretch at 20–77 (LGDLVLAKVKGFPAWPAKIGQPEDWNQAPDPKKHFVQFYGTGEIGFVTPPDIQPFTSE) folds into the PWWP domain. Disordered stretches follow at residues 133 to 197 (KYLN…SPDP), 211 to 302 (TCTD…DLNI), 319 to 356 (FENE…SKRL), 409 to 439 (EHTS…SDSD), 460 to 491 (DDDD…ANAS), 641 to 685 (GIPK…TSTP), and 797 to 835 (LTPS…SLSG). 2 stretches are compositionally biased toward polar residues: residues 173-187 (QDSS…SPSS) and 211-225 (TCTD…NLVN). Composition is skewed to basic and acidic residues over residues 228–257 (RIIR…RAAT), 274–293 (GQDH…ESSD), and 331–350 (DESK…DQKQ). 2 stretches are compositionally biased toward polar residues: residues 660-673 (RVSS…NQRS) and 797-814 (LTPS…QAGT). One can recognise a CID domain in the interval 838-979 (EAAISRDTFE…RYIGDLGASG (142 aa)). The segment at 1110–1203 (PATTCATELP…SLPLQPGFAP (94 aa)) is disordered. A compositionally biased stretch (pro residues) spans 1124 to 1170 (GSPPLPHESPPSPPPQPPSSPPPPSSPPQLAPAPPPSDHCLPPPTAP).

In terms of tissue distribution, expressed throughout young primordia, and vegetative and reproductive apices.

The protein localises to the nucleus. In terms of biological role, probable transcription factor that acts with partial redundancy with HULK2 and HULK3. Plays diverse and essential roles in the control of plant development, physiology and flowering time. This chain is Protein HUA2-LIKE 1, found in Arabidopsis thaliana (Mouse-ear cress).